Here is a 391-residue protein sequence, read N- to C-terminus: Mannose-6-phosphate isomerase (391 aa).

The Zn(2+) site is built by Gln-97, His-99, Glu-134, and His-255. The active site involves Arg-274. Position 280 is an N6-acetyllysine (Lys-280).

It belongs to the mannose-6-phosphate isomerase type 1 family. Requires Zn(2+) as cofactor.

It localises to the cytoplasm. It carries out the reaction D-mannose 6-phosphate = D-fructose 6-phosphate. Involved in the conversion of glucose to GDP-L-fucose, which can be converted to L-fucose, a capsular polysaccharide. The chain is Mannose-6-phosphate isomerase (manA) from Shigella flexneri.